The primary structure comprises 186 residues: Phosphoprotein p30 (186 aa).

This sequence belongs to the asfivirus phosphoprotein p30 family. As to quaternary structure, oligomer. Interacts with host HNRNPK. Phosphorylated on serine residues in the 115 N-terminal amino acids.

The protein resides in the host cytoplasm. The protein localises to the host nucleus. Its subcellular location is the virion. Its function is as follows. Modifies the subcellular distribution of heterogeneous nuclear ribonucleoprotein K (HNRNPK) and may contribute to modulate HNRNPK functions related to processing and export of mRNAs during ASFV infection. Necessary for virus internalization. The chain is Phosphoprotein p30 from African swine fever virus (isolate Tick/South Africa/Pretoriuskop Pr4/1996) (ASFV).